Here is a 161-residue protein sequence, read N- to C-terminus: 2-C-methyl-D-erythritol 2,4-cyclodiphosphate synthase (161 aa).

A divalent metal cation-binding residues include Asp10 and His12. 4-CDP-2-C-methyl-D-erythritol 2-phosphate-binding positions include 10–12 and 36–37; these read DVH and HS. A divalent metal cation is bound at residue His44. Residues 58–60, 63–67, 102–108, 134–137, Phe141, and Arg144 each bind 4-CDP-2-C-methyl-D-erythritol 2-phosphate; these read DIG, FPDTD, AQAPKMA, and TTTE.

This sequence belongs to the IspF family. As to quaternary structure, homotrimer. A divalent metal cation serves as cofactor.

The catalysed reaction is 4-CDP-2-C-methyl-D-erythritol 2-phosphate = 2-C-methyl-D-erythritol 2,4-cyclic diphosphate + CMP. The protein operates within isoprenoid biosynthesis; isopentenyl diphosphate biosynthesis via DXP pathway; isopentenyl diphosphate from 1-deoxy-D-xylulose 5-phosphate: step 4/6. Functionally, involved in the biosynthesis of isopentenyl diphosphate (IPP) and dimethylallyl diphosphate (DMAPP), two major building blocks of isoprenoid compounds. Catalyzes the conversion of 4-diphosphocytidyl-2-C-methyl-D-erythritol 2-phosphate (CDP-ME2P) to 2-C-methyl-D-erythritol 2,4-cyclodiphosphate (ME-CPP) with a corresponding release of cytidine 5-monophosphate (CMP). The chain is 2-C-methyl-D-erythritol 2,4-cyclodiphosphate synthase from Shewanella sediminis (strain HAW-EB3).